Consider the following 52-residue polypeptide: Small, acid-soluble spore protein K (52 aa).

The disordered stretch occupies residues 1–52 (MGKQAEFWSESKNNSKIDGQPKAKSRFASKRPNGTINTHPQERMRAANQQEE).

The protein belongs to the SspK family.

It is found in the spore core. This Bacillus anthracis (strain A0248) protein is Small, acid-soluble spore protein K.